Here is a 501-residue protein sequence, read N- to C-terminus: Nuclear receptor subfamily 5 group A member 2 (501 aa).

Positions 43 to 114 (EELCPVCGDK…KCLSVGMKLE (72 aa)) form a DNA-binding region, nuclear receptor. Zn(2+) is bound by residues cysteine 46, cysteine 49, cysteine 63, cysteine 66, cysteine 82, cysteine 88, cysteine 98, and cysteine 101. 2 consecutive NR C4-type zinc fingers follow at residues 46–66 (CPVC…CESC) and 82–106 (CIEN…FQKC). The segment at 112–127 (KLEAVRADRMRGGRNK) is C-terminal extension (CTE). An FTZ-F1 box motif is present at residues 128 to 147 (FGPMYKRDRALKQQKKALIR). Residues 186-207 (NHTALPPTDYDRSPFVTSPISM) form a disordered region. Positions 260-499 (SIPHLILELQ…NLLIEMLHAK (240 aa)) constitute an NR LBD domain. A phospholipid derivative is bound by residues 381–384 (GATL), tyrosine 476, and lysine 480. The segment at 488 to 499 (CNNLLIEMLHAK) is AF-2.

It belongs to the nuclear hormone receptor family. NR5 subfamily. Monomer; Binds DNA as a monomer. As to expression, detected in liver and adrenal gland.

It localises to the nucleus. Its subcellular location is the chromosome. In terms of biological role, orphan nuclear receptor that binds DNA as a monomer to the 5'-TCAAGGCCA-3' sequence and controls expression of target genes: regulates key biological processes, such as cholesterol and bile acid synthesis pathways, as well as cartilage, liver and pancreas morphogenesis. Ligand-binding causes conformational change which causes recruitment of coactivators, promoting target gene activation. The specific ligand is unknown, but specific phospholipids, such as phosphatidylethanolamine, phosphatidylserine, dilauroyl phosphatidylcholine and diundecanoyl phosphatidylcholine can act as ligand in vitro. Acts as a pioneer transcription factor, which unwraps target DNA from histones and elicits local opening of closed chromatin. Involved in the formation of connective tissue in lower jaw. In Gallus gallus (Chicken), this protein is Nuclear receptor subfamily 5 group A member 2.